A 94-amino-acid chain; its full sequence is Non-specific lipid-transfer protein 1 (94 aa).

4 cysteine pairs are disulfide-bonded: Cys-4–Cys-53, Cys-14–Cys-30, Cys-31–Cys-76, and Cys-51–Cys-90.

Its function is as follows. Plant non-specific lipid-transfer proteins transfer phospholipids as well as galactolipids across membranes. May play a role in wax or cutin deposition in the cell walls of expanding epidermal cells and certain secretory tissues. In Amaranthus hypochondriacus (Prince-of-Wales feather), this protein is Non-specific lipid-transfer protein 1.